The primary structure comprises 294 residues: MNSLEKKQITYGQRLKIAFQYAMPQIYLTQIAGWFANKRWGAVTHFVIKMFAKKYNVHMAEAAKPNFSDYATFNEFFIRQLKEYARPINQNTDALCLPADGKISQCGHIDDELLLQAKGHSFSLRDLLAGDEELTRLFKDGEFVTTYLSPRDYHRVHMPCNGTIRKMIYVPGELFSVNPFLNTHIPNLLARNERVICLFDTDFGPMVQILVGATITASISTVWEGVINPPRTGDIRTWTYEGQSAVSLAKGQEMGAFQLGSTVINLFPKNAVKLADYLQVDTVTRVGEILAYKK.

Active-site charge relay system; for autoendoproteolytic cleavage activity residues include Asp-100, His-157, and Ser-261. Ser-261 serves as the catalytic Schiff-base intermediate with substrate; via pyruvic acid; for decarboxylase activity. Ser-261 bears the Pyruvic acid (Ser); by autocatalysis mark.

The protein belongs to the phosphatidylserine decarboxylase family. PSD-B subfamily. Prokaryotic type I sub-subfamily. Heterodimer of a large membrane-associated beta subunit and a small pyruvoyl-containing alpha subunit. Pyruvate is required as a cofactor. Is synthesized initially as an inactive proenzyme. Formation of the active enzyme involves a self-maturation process in which the active site pyruvoyl group is generated from an internal serine residue via an autocatalytic post-translational modification. Two non-identical subunits are generated from the proenzyme in this reaction, and the pyruvate is formed at the N-terminus of the alpha chain, which is derived from the carboxyl end of the proenzyme. The autoendoproteolytic cleavage occurs by a canonical serine protease mechanism, in which the side chain hydroxyl group of the serine supplies its oxygen atom to form the C-terminus of the beta chain, while the remainder of the serine residue undergoes an oxidative deamination to produce ammonia and the pyruvoyl prosthetic group on the alpha chain. During this reaction, the Ser that is part of the protease active site of the proenzyme becomes the pyruvoyl prosthetic group, which constitutes an essential element of the active site of the mature decarboxylase.

Its subcellular location is the cell membrane. It carries out the reaction a 1,2-diacyl-sn-glycero-3-phospho-L-serine + H(+) = a 1,2-diacyl-sn-glycero-3-phosphoethanolamine + CO2. The protein operates within phospholipid metabolism; phosphatidylethanolamine biosynthesis; phosphatidylethanolamine from CDP-diacylglycerol: step 2/2. Catalyzes the formation of phosphatidylethanolamine (PtdEtn) from phosphatidylserine (PtdSer). This is Phosphatidylserine decarboxylase proenzyme from Mannheimia succiniciproducens (strain KCTC 0769BP / MBEL55E).